A 512-amino-acid polypeptide reads, in one-letter code: Cytochrome P450 84A4 (512 aa).

Residues 7 to 24 (LIVLVPLLLFLFPHLLLR) form a helical membrane-spanning segment. Heme is bound at residue cysteine 447.

The protein belongs to the cytochrome P450 family. Heme serves as cofactor. In terms of tissue distribution, expressed in seedlings, roots, stems and inflorescence nodes. Low or no expression in leaves, flowers, seeds and lignifying tissue.

It localises to the membrane. In terms of biological role, cytochrome P450 involved in the production of catechol-substituted substrates needed for the arabidopyrones biosynthesis. Converts p-coumaraldehyde into caffealdehyde. This is Cytochrome P450 84A4 (CYP84A4) from Arabidopsis thaliana (Mouse-ear cress).